The sequence spans 133 residues: Fluoride-specific ion channel FluC (133 aa).

The next 4 helical transmembrane spans lie at 12–32 (LAMT…ASLI), 41–61 (WGTL…LVWL), 76–96 (IVGV…CLVF), and 104–124 (MIGI…FAGA). Na(+) is bound by residues Gly81 and Thr84.

This sequence belongs to the fluoride channel Fluc/FEX (TC 1.A.43) family.

Its subcellular location is the cell inner membrane. The catalysed reaction is fluoride(in) = fluoride(out). Its activity is regulated as follows. Na(+) is not transported, but it plays an essential structural role and its presence is essential for fluoride channel function. In terms of biological role, fluoride-specific ion channel. Important for reducing fluoride concentration in the cell, thus reducing its toxicity. The protein is Fluoride-specific ion channel FluC of Xanthomonas axonopodis pv. citri (strain 306).